Reading from the N-terminus, the 138-residue chain is Venom allergen 2 (138 aa).

An N-terminal signal peptide occupies residues 1 to 19 (MKSFVLATCLLGFAQIIYA). Cystine bridges form between cysteine 34–cysteine 57, cysteine 81–cysteine 94, and cysteine 101–cysteine 122.

It belongs to the ant venom allergen 2/4 family. As to quaternary structure, homodimer; disulfide-linked. As to expression, expressed by the venom gland.

Its subcellular location is the secreted. This chain is Venom allergen 2, found in Solenopsis invicta (Red imported fire ant).